The sequence spans 75 residues: Protein BsdD (75 aa).

In terms of biological role, involved in the non-oxidative decarboxylation and detoxification of phenolic derivatives under both aerobic and anaerobic conditions, however the precise biochemical function of BsdD in metabolism of phenolic acid is unknown. In Bacillus subtilis (strain 168), this protein is Protein BsdD.